A 483-amino-acid chain; its full sequence is Regulatory protein ViaA (483 aa).

Belongs to the ViaA family. As to quaternary structure, homodimer. Interacts with RavA.

It localises to the cytoplasm. Its function is as follows. Component of the RavA-ViaA chaperone complex, which may act on the membrane to optimize the function of some of the respiratory chains. ViaA stimulates the ATPase activity of RavA. This chain is Regulatory protein ViaA, found in Enterobacter sp. (strain 638).